Consider the following 744-residue polypeptide: 1,4-alpha-glucan branching enzyme GlgB (744 aa).

Catalysis depends on Asp-415, which acts as the Nucleophile. Glu-468 serves as the catalytic Proton donor.

It belongs to the glycosyl hydrolase 13 family. GlgB subfamily. As to quaternary structure, monomer.

The catalysed reaction is Transfers a segment of a (1-&gt;4)-alpha-D-glucan chain to a primary hydroxy group in a similar glucan chain.. It participates in glycan biosynthesis; glycogen biosynthesis. Catalyzes the formation of the alpha-1,6-glucosidic linkages in glycogen by scission of a 1,4-alpha-linked oligosaccharide from growing alpha-1,4-glucan chains and the subsequent attachment of the oligosaccharide to the alpha-1,6 position. This Shewanella frigidimarina (strain NCIMB 400) protein is 1,4-alpha-glucan branching enzyme GlgB.